The chain runs to 171 residues: UPF0316 protein EAT1b_0871 (171 aa).

3 consecutive transmembrane segments (helical) span residues Ile4–Met24, Ile32–Phe52, and Thr57–Val77.

It belongs to the UPF0316 family.

The protein resides in the cell membrane. This chain is UPF0316 protein EAT1b_0871, found in Exiguobacterium sp. (strain ATCC BAA-1283 / AT1b).